The sequence spans 501 residues: ATP synthase subunit alpha (501 aa).

170–177 (GDRQTGKS) lines the ATP pocket.

This sequence belongs to the ATPase alpha/beta chains family. In terms of assembly, F-type ATPases have 2 components, CF(1) - the catalytic core - and CF(0) - the membrane proton channel. CF(1) has five subunits: alpha(3), beta(3), gamma(1), delta(1), epsilon(1). CF(0) has three main subunits: a(1), b(2) and c(9-12). The alpha and beta chains form an alternating ring which encloses part of the gamma chain. CF(1) is attached to CF(0) by a central stalk formed by the gamma and epsilon chains, while a peripheral stalk is formed by the delta and b chains.

The protein resides in the cell membrane. The catalysed reaction is ATP + H2O + 4 H(+)(in) = ADP + phosphate + 5 H(+)(out). In terms of biological role, produces ATP from ADP in the presence of a proton gradient across the membrane. The alpha chain is a regulatory subunit. The polypeptide is ATP synthase subunit alpha (Acholeplasma laidlawii (strain PG-8A)).